The following is a 364-amino-acid chain: Peptidyl-prolyl cis-trans isomerase D (364 aa).

Residues 7–170 (YFDITIGNKP…EDAVIAKCGE (164 aa)) form the PPIase cyclophilin-type domain. 3 TPR repeats span residues 208–241 (ATHL…LNEK), 261–294 (IPCY…DSKY), and 301–334 (TKAY…DPED).

The protein belongs to the cyclophilin-type PPIase family. PPIase D subfamily.

It is found in the cytoplasm. The catalysed reaction is [protein]-peptidylproline (omega=180) = [protein]-peptidylproline (omega=0). PPIases accelerate the folding of proteins. It catalyzes the cis-trans isomerization of proline imidic peptide bonds in oligopeptides. This is Peptidyl-prolyl cis-trans isomerase D (cyp12) from Rhizopus delemar (strain RA 99-880 / ATCC MYA-4621 / FGSC 9543 / NRRL 43880) (Mucormycosis agent).